Reading from the N-terminus, the 217-residue chain is Ribonuclease HII (217 aa).

An RNase H type-2 domain is found at lysine 17–arginine 207. 3 residues coordinate a divalent metal cation: aspartate 23, glutamate 24, and aspartate 116.

This sequence belongs to the RNase HII family. Requires Mn(2+) as cofactor. Mg(2+) is required as a cofactor.

It is found in the cytoplasm. It carries out the reaction Endonucleolytic cleavage to 5'-phosphomonoester.. In terms of biological role, endonuclease that specifically degrades the RNA of RNA-DNA hybrids. The protein is Ribonuclease HII of Nitrosomonas europaea (strain ATCC 19718 / CIP 103999 / KCTC 2705 / NBRC 14298).